The primary structure comprises 276 residues: NH(3)-dependent NAD(+) synthetase (276 aa).

G43–S50 serves as a coordination point for ATP. D49 contributes to the Mg(2+) binding site. Deamido-NAD(+) is bound at residue R146. T166 contributes to the ATP binding site. E171 is a binding site for Mg(2+). Residues K179 and D186 each contribute to the deamido-NAD(+) site. Residues K195 and T217 each contribute to the ATP site. H266–K267 lines the deamido-NAD(+) pocket.

It belongs to the NAD synthetase family. In terms of assembly, homodimer.

It catalyses the reaction deamido-NAD(+) + NH4(+) + ATP = AMP + diphosphate + NAD(+) + H(+). It participates in cofactor biosynthesis; NAD(+) biosynthesis; NAD(+) from deamido-NAD(+) (ammonia route): step 1/1. Its function is as follows. Catalyzes the ATP-dependent amidation of deamido-NAD to form NAD. Uses ammonia as a nitrogen source. This Shewanella woodyi (strain ATCC 51908 / MS32) protein is NH(3)-dependent NAD(+) synthetase.